A 180-amino-acid chain; its full sequence is Sec-independent protein translocase protein TatB (180 aa).

The helical transmembrane segment at 1–21 (MFDIGWSELLVIGVVALIAIG) threads the bilayer. Positions 77 to 180 (TRGDLMTRLT…DQTARGAKAS (104 aa)) are disordered. The span at 105–129 (ADKPSVSSDAASASGSAAPEAGAAE) shows a compositional bias: low complexity.

Belongs to the TatB family. As to quaternary structure, the Tat system comprises two distinct complexes: a TatABC complex, containing multiple copies of TatA, TatB and TatC subunits, and a separate TatA complex, containing only TatA subunits. Substrates initially bind to the TatABC complex, which probably triggers association of the separate TatA complex to form the active translocon.

Its subcellular location is the cell inner membrane. In terms of biological role, part of the twin-arginine translocation (Tat) system that transports large folded proteins containing a characteristic twin-arginine motif in their signal peptide across membranes. Together with TatC, TatB is part of a receptor directly interacting with Tat signal peptides. TatB may form an oligomeric binding site that transiently accommodates folded Tat precursor proteins before their translocation. The sequence is that of Sec-independent protein translocase protein TatB from Nitrobacter winogradskyi (strain ATCC 25391 / DSM 10237 / CIP 104748 / NCIMB 11846 / Nb-255).